Consider the following 96-residue polypeptide: DNA-directed RNA polymerase subunit Rpo11 (96 aa).

This sequence belongs to the archaeal Rpo11/eukaryotic RPB11/RPC19 RNA polymerase subunit family. In terms of assembly, part of the RNA polymerase complex.

The protein resides in the cytoplasm. It catalyses the reaction RNA(n) + a ribonucleoside 5'-triphosphate = RNA(n+1) + diphosphate. DNA-dependent RNA polymerase (RNAP) catalyzes the transcription of DNA into RNA using the four ribonucleoside triphosphates as substrates. The polypeptide is DNA-directed RNA polymerase subunit Rpo11 (Methanococcus maripaludis (strain DSM 14266 / JCM 13030 / NBRC 101832 / S2 / LL)).